We begin with the raw amino-acid sequence, 166 residues long: ATP synthase subunit b (166 aa).

A helical membrane pass occupies residues 27 to 47 (FFVVLLIFLIVLGVIAKWVVP). Residues 124–143 (SADQQLSQQGSAAQSELQSS) form a disordered region.

It belongs to the ATPase B chain family. In terms of assembly, F-type ATPases have 2 components, F(1) - the catalytic core - and F(0) - the membrane proton channel. F(1) has five subunits: alpha(3), beta(3), gamma(1), delta(1), epsilon(1). F(0) has three main subunits: a(1), b(2) and c(10-14). The alpha and beta chains form an alternating ring which encloses part of the gamma chain. F(1) is attached to F(0) by a central stalk formed by the gamma and epsilon chains, while a peripheral stalk is formed by the delta and b chains.

It localises to the cell membrane. Its function is as follows. F(1)F(0) ATP synthase produces ATP from ADP in the presence of a proton or sodium gradient. F-type ATPases consist of two structural domains, F(1) containing the extramembraneous catalytic core and F(0) containing the membrane proton channel, linked together by a central stalk and a peripheral stalk. During catalysis, ATP synthesis in the catalytic domain of F(1) is coupled via a rotary mechanism of the central stalk subunits to proton translocation. In terms of biological role, component of the F(0) channel, it forms part of the peripheral stalk, linking F(1) to F(0). In Mycolicibacterium vanbaalenii (strain DSM 7251 / JCM 13017 / BCRC 16820 / KCTC 9966 / NRRL B-24157 / PYR-1) (Mycobacterium vanbaalenii), this protein is ATP synthase subunit b.